The chain runs to 551 residues: Solute carrier family 22 member 27 (551 aa).

Residues 1–15 (MSFQELLNQVGSLGR) are Cytoplasmic-facing. The helical transmembrane segment at 16–36 (FQILQIVFLLLLNAIVVPHIA) threads the bilayer. Residues 37–145 (MENFTAAIPN…DLVCESQALN (109 aa)) are Extracellular-facing. N-linked (GlcNAc...) asparagine glycans are attached at residues N39, N56, N62, N102, and N107. The helical transmembrane segment at 146 to 166 (SVTKFSFMIGLFIGGIICGHL) threads the bilayer. Residues 167–173 (SDRLGRK) lie on the Cytoplasmic side of the membrane. The helical transmembrane segment at 174 to 194 (FILTCALLQFAITETCVAFAP) threads the bilayer. Topologically, residues 195 to 203 (SFFIYCSLR) are extracellular. A helical transmembrane segment spans residues 204–224 (FLAGLSVEPILVNSHLLMLEW). Over 225–234 (TSPKFLTMMA) the chain is Cytoplasmic. A helical membrane pass occupies residues 235–255 (ALLSCAPNIGYMISAGLAFLF). The Extracellular segment spans residues 256-258 (RIW). Residues 259–279 (HHLQLTMSVPIFFFLILTRWL) form a helical membrane-spanning segment. The Cytoplasmic segment spans residues 280-348 (SESARWLIVT…LFHTSILRKR (69 aa)). A helical membrane pass occupies residues 349–369 (ICVLSFMRLFFTVSIFGLAVH). Over 370-376 (LQHLSSN) the chain is Extracellular. Residues 377 to 397 (IILLQFLISALAILVSVIGPF) traverse the membrane as a helical segment. The Cytoplasmic portion of the chain corresponds to 398–405 (VLNHIGRR). The helical transmembrane segment at 406–426 (ITYLVLMSLRGIFILIAVFVP) threads the bilayer. Residues 427-432 (QEMQTL) lie on the Extracellular side of the membrane. The chain crosses the membrane as a helical span at residues 433–453 (RIIMATLAEGISSLCVGVSRL). Topologically, residues 454–467 (HTNELLPTTLRATA) are cytoplasmic. The helical transmembrane segment at 468–488 (VGVIGFFGNSGSFLSPLFMLL) threads the bilayer. Topologically, residues 489 to 494 (ATYYAN) are extracellular. Residues 495–515 (MPWIFYGGFSIFNAFTVFLLP) traverse the membrane as a helical segment. At 516–551 (ETKNQPLPDSTHDVGNDWKESRKGKKEDPIIKVTRF) the chain is on the cytoplasmic side. Residues 523–551 (PDSTHDVGNDWKESRKGKKEDPIIKVTRF) are disordered. Residues 525–545 (STHDVGNDWKESRKGKKEDPI) show a composition bias toward basic and acidic residues.

The protein belongs to the major facilitator (TC 2.A.1) superfamily. Organic cation transporter (TC 2.A.1.19) family. As to expression, expressed in proximal kidney tubules, and in liver hepatocytes (at protein level).

It localises to the cell membrane. Its function is as follows. Does not appear to have transporter activity. Functionally, sodium-independent organic anion transporter which exhibits high specificity for L-carnitine. Can also transport salicylic acid and the drug cimetidine. In Mus musculus (Mouse), this protein is Solute carrier family 22 member 27.